The sequence spans 227 residues: tRNA (guanine-N(7)-)-methyltransferase (227 aa).

The S-adenosyl-L-methionine site is built by glutamate 60, glutamate 85, aspartate 112, and aspartate 135. The active site involves aspartate 135. Substrate contacts are provided by residues lysine 139, aspartate 171, and 206–209 (TKFE).

This sequence belongs to the class I-like SAM-binding methyltransferase superfamily. TrmB family.

The catalysed reaction is guanosine(46) in tRNA + S-adenosyl-L-methionine = N(7)-methylguanosine(46) in tRNA + S-adenosyl-L-homocysteine. It participates in tRNA modification; N(7)-methylguanine-tRNA biosynthesis. In terms of biological role, catalyzes the formation of N(7)-methylguanine at position 46 (m7G46) in tRNA. The chain is tRNA (guanine-N(7)-)-methyltransferase from Thiobacillus denitrificans (strain ATCC 25259 / T1).